We begin with the raw amino-acid sequence, 286 residues long: Beta-lactamase SHV-24 (286 aa).

The N-terminal stretch at 1-21 (MRYIRLCIISLLATLPLAVHA) is a signal peptide. Serine 66 (acyl-ester intermediate) is an active-site residue. The cysteines at positions 73 and 119 are disulfide-linked. Glutamate 164 serves as the catalytic Proton acceptor. 230 to 232 (KTG) contributes to the substrate binding site.

The protein belongs to the class-A beta-lactamase family.

It carries out the reaction a beta-lactam + H2O = a substituted beta-amino acid. Functionally, hydrolyzes ampicillin. Can also hydrolyze cephaloridine, aztreonam and ceftazidime with a low catalytic rate. The sequence is that of Beta-lactamase SHV-24 (bla) from Escherichia coli.